The following is a 355-amino-acid chain: Zinc finger protein CONSTANS-LIKE 1 (355 aa).

Residues Cys12, Cys15, Cys35, His40, Cys55, Cys58, Cys78, and His83 each coordinate Zn(2+). The segment at 12 to 54 adopts a B box-type 1; atypical zinc-finger fold; it reads CDTCRSAACTVYCRADSAYLCSSCDAQVHAANRLASRHERVRV. The B box-type 2; atypical zinc-finger motif lies at 55–97; it reads CQSCERAPAAFFCKADAASLCTTCDSEIHSANPLARRHQRVPI. Positions 252-264 are enriched in polar residues; the sequence is ESTTSDATVSNPR. The segment at 252 to 281 is disordered; it reads ESTTSDATVSNPRSPKAVTDQPPYPPAQML. Residues 286-328 form the CCT domain; it reads REARVLRYREKKKMRKFEKTIRYASRKAYAEKRPRIKGRFAKK.

This sequence belongs to the CONSTANS family. As to expression, highly expressed in leaves and at lower levels in stems, flowers and siliques. Not detected in roots.

Its subcellular location is the nucleus. Putative transcription factor that may be involved in the light input to the circadian clock but does not affect flowering time. In Arabidopsis thaliana (Mouse-ear cress), this protein is Zinc finger protein CONSTANS-LIKE 1 (COL1).